A 438-amino-acid polypeptide reads, in one-letter code: Glutamyl-tRNA(Gln) amidotransferase subunit D (438 aa).

Positions 92-422 (PDVTIIGTGG…EEVRRMMLTN (331 aa)) constitute an Asparaginase/glutaminase domain. Residues Thr102, Thr178, Asp179, and Lys256 contribute to the active site.

This sequence belongs to the asparaginase 1 family. GatD subfamily. In terms of assembly, heterodimer of GatD and GatE.

The enzyme catalyses L-glutamyl-tRNA(Gln) + L-glutamine + ATP + H2O = L-glutaminyl-tRNA(Gln) + L-glutamate + ADP + phosphate + H(+). Allows the formation of correctly charged Gln-tRNA(Gln) through the transamidation of misacylated Glu-tRNA(Gln) in organisms which lack glutaminyl-tRNA synthetase. The reaction takes place in the presence of glutamine and ATP through an activated gamma-phospho-Glu-tRNA(Gln). The GatDE system is specific for glutamate and does not act on aspartate. The polypeptide is Glutamyl-tRNA(Gln) amidotransferase subunit D (Pyrococcus horikoshii (strain ATCC 700860 / DSM 12428 / JCM 9974 / NBRC 100139 / OT-3)).